Here is a 274-residue protein sequence, read N- to C-terminus: uncharacterized protein (274 aa).

The next 5 membrane-spanning stretches (helical) occupy residues 9 to 29 (SLLL…VSIL), 64 to 84 (WFWH…FFIL), 135 to 155 (LAGH…ALLL), 165 to 185 (MSSM…WQNA), and 219 to 239 (IIVY…LVLG).

This sequence belongs to the steroid 5-alpha reductase family.

Its subcellular location is the endoplasmic reticulum membrane. This is an uncharacterized protein from Schizosaccharomyces pombe (strain 972 / ATCC 24843) (Fission yeast).